A 318-amino-acid polypeptide reads, in one-letter code: 4-hydroxy-3-methylbut-2-enyl diphosphate reductase (318 aa).

Residue Cys-12 participates in [4Fe-4S] cluster binding. (2E)-4-hydroxy-3-methylbut-2-enyl diphosphate-binding residues include His-41 and His-74. Dimethylallyl diphosphate is bound by residues His-41 and His-74. The isopentenyl diphosphate site is built by His-41 and His-74. Residue Cys-96 participates in [4Fe-4S] cluster binding. His-124 serves as a coordination point for (2E)-4-hydroxy-3-methylbut-2-enyl diphosphate. Residue His-124 coordinates dimethylallyl diphosphate. His-124 serves as a coordination point for isopentenyl diphosphate. Residue Glu-126 is the Proton donor of the active site. A (2E)-4-hydroxy-3-methylbut-2-enyl diphosphate-binding site is contributed by Thr-167. Residue Cys-197 participates in [4Fe-4S] cluster binding. Residues Ser-225, Ser-226, Asn-227, and Ser-269 each contribute to the (2E)-4-hydroxy-3-methylbut-2-enyl diphosphate site. Dimethylallyl diphosphate-binding residues include Ser-225, Ser-226, Asn-227, and Ser-269. Isopentenyl diphosphate is bound by residues Ser-225, Ser-226, Asn-227, and Ser-269.

It belongs to the IspH family. It depends on [4Fe-4S] cluster as a cofactor.

The catalysed reaction is isopentenyl diphosphate + 2 oxidized [2Fe-2S]-[ferredoxin] + H2O = (2E)-4-hydroxy-3-methylbut-2-enyl diphosphate + 2 reduced [2Fe-2S]-[ferredoxin] + 2 H(+). It catalyses the reaction dimethylallyl diphosphate + 2 oxidized [2Fe-2S]-[ferredoxin] + H2O = (2E)-4-hydroxy-3-methylbut-2-enyl diphosphate + 2 reduced [2Fe-2S]-[ferredoxin] + 2 H(+). It participates in isoprenoid biosynthesis; dimethylallyl diphosphate biosynthesis; dimethylallyl diphosphate from (2E)-4-hydroxy-3-methylbutenyl diphosphate: step 1/1. It functions in the pathway isoprenoid biosynthesis; isopentenyl diphosphate biosynthesis via DXP pathway; isopentenyl diphosphate from 1-deoxy-D-xylulose 5-phosphate: step 6/6. Functionally, catalyzes the conversion of 1-hydroxy-2-methyl-2-(E)-butenyl 4-diphosphate (HMBPP) into a mixture of isopentenyl diphosphate (IPP) and dimethylallyl diphosphate (DMAPP). Acts in the terminal step of the DOXP/MEP pathway for isoprenoid precursor biosynthesis. The sequence is that of 4-hydroxy-3-methylbut-2-enyl diphosphate reductase from Francisella philomiragia subsp. philomiragia (strain ATCC 25017 / CCUG 19701 / FSC 153 / O#319-036).